A 323-amino-acid chain; its full sequence is Cytoskeleton protein RodZ (323 aa).

Residues 1-111 (MNTEASQDKT…LGKRRKKRDG (111 aa)) lie on the Cytoplasmic side of the membrane. The region spanning 19 to 71 (LRQAREQLGLSQQAVAERLCLKMSTVRDIEEDNLSADLASTFVRGYIRSYAKL) is the HTH cro/C1-type domain. The H-T-H motif DNA-binding region spans 30–49 (QQAVAERLCLKMSTVRDIEE). The chain crosses the membrane as a helical; Signal-anchor for type II membrane protein span at residues 112–132 (WLMSFTWLIVFVVVGLTGAWW). Topologically, residues 133 to 323 (WQNHKAQQEE…RVARLTVAAQ (191 aa)) are periplasmic. Polar residues-rich tracts occupy residues 149–172 (QSSAQLSQNNEGQSVPLTDSNADN) and 179–214 (NGSTPVDTGVAPQQSQTPAVSGSATAQQPAVVSPSQ). Residues 149–236 (QSSAQLSQNN…APLPTADAGV (88 aa)) form a disordered region. The segment covering 215-234 (TTLPETTPAAPTAPLPTADA) has biased composition (low complexity).

Belongs to the RodZ family.

It localises to the cell inner membrane. Its function is as follows. Cytoskeletal protein that is involved in cell-shape control through regulation of the length of the long axis. This is Cytoskeleton protein RodZ from Serratia proteamaculans (strain 568).